We begin with the raw amino-acid sequence, 338 residues long: UDP-glucose 4-epimerase (338 aa).

Residues 11–12, 31–36, 58–59, 80–84, N99, S124, Y149, K153, and F178 each bind NAD(+); these read YI, DNLCNS, DI, and FAGLK. Substrate-binding residues include S124 and Y149. The Proton acceptor role is filled by Y149. Substrate-binding positions include N179, 199 to 200, 216 to 218, R231, 292 to 295, and Y299; these read NL, AIF, and REGD.

This sequence belongs to the NAD(P)-dependent epimerase/dehydratase family. In terms of assembly, homodimer. Requires NAD(+) as cofactor.

It carries out the reaction UDP-alpha-D-glucose = UDP-alpha-D-galactose. Its pathway is carbohydrate metabolism; galactose metabolism. Its function is as follows. Involved in the metabolism of galactose. Catalyzes the conversion of UDP-galactose (UDP-Gal) to UDP-glucose (UDP-Glc) through a mechanism involving the transient reduction of NAD. In Yersinia pestis, this protein is UDP-glucose 4-epimerase (galE).